We begin with the raw amino-acid sequence, 337 residues long: MAVEMFYDDDADLSIIQGRKVAVIGYGSQGHAHSLSLRDSGVDVRIGLKEGSKSRAKAEEQGLTVGTPAEVSEWADVIMVLAPDTAQASIFTNDIEPNLKDGDALFFGHGLNIHFDLIKAPEFVTVGMVAPKGPGHLVRRQFVDGKGVPALIAIDQDPKGEGQALALSYAKGIGGTRAGVIKTTFKEETETDLFGEQAVLCGGTEELVKTGFEVMVEAGYAPEMAYFEVLHELKLIVDLMYEGGIARMNYSVSDTAEFGGYLSGPRVIDAGTKERMKAILADIQSGEFTRRLVANVENGNTELEGLRKANAEHPIEVTGKKLRDLMSWVDRPITETA.

In terms of domain architecture, KARI N-terminal Rossmann spans 3–183; that stretch reads VEMFYDDDAD…GGTRAGVIKT (181 aa). NADP(+) contacts are provided by residues 26–29, Lys-49, Ser-52, Ser-54, and 84–87; these read YGSQ and DTAQ. His-109 is a catalytic residue. Residue Gly-135 coordinates NADP(+). Residues 184–329 enclose the KARI C-terminal knotted domain; sequence TFKEETETDL…KKLRDLMSWV (146 aa). The Mg(2+) site is built by Asp-192, Glu-196, Glu-228, and Glu-232. Ser-253 is a binding site for substrate.

This sequence belongs to the ketol-acid reductoisomerase family. Requires Mg(2+) as cofactor.

It carries out the reaction (2R)-2,3-dihydroxy-3-methylbutanoate + NADP(+) = (2S)-2-acetolactate + NADPH + H(+). The catalysed reaction is (2R,3R)-2,3-dihydroxy-3-methylpentanoate + NADP(+) = (S)-2-ethyl-2-hydroxy-3-oxobutanoate + NADPH + H(+). Its pathway is amino-acid biosynthesis; L-isoleucine biosynthesis; L-isoleucine from 2-oxobutanoate: step 2/4. It functions in the pathway amino-acid biosynthesis; L-valine biosynthesis; L-valine from pyruvate: step 2/4. In terms of biological role, involved in the biosynthesis of branched-chain amino acids (BCAA). Catalyzes an alkyl-migration followed by a ketol-acid reduction of (S)-2-acetolactate (S2AL) to yield (R)-2,3-dihydroxy-isovalerate. In the isomerase reaction, S2AL is rearranged via a Mg-dependent methyl migration to produce 3-hydroxy-3-methyl-2-ketobutyrate (HMKB). In the reductase reaction, this 2-ketoacid undergoes a metal-dependent reduction by NADPH to yield (R)-2,3-dihydroxy-isovalerate. The protein is Ketol-acid reductoisomerase (NADP(+)) of Rhodococcus jostii (strain RHA1).